The sequence spans 192 residues: Adenylate kinase (192 aa).

10–18 (GVPGVGGTT) serves as a coordination point for ATP.

The protein belongs to the archaeal adenylate kinase family. In terms of assembly, monomer.

The protein resides in the cytoplasm. It carries out the reaction AMP + ATP = 2 ADP. The chain is Adenylate kinase from Methanococcus maripaludis (strain C7 / ATCC BAA-1331).